The primary structure comprises 460 residues: Chromosomal replication initiator protein DnaA (460 aa).

Residues 1 to 83 (MENIWLEAQT…EFHVADEKPE (83 aa)) form a domain I, interacts with DnaA modulators region. Residues 78–121 (ADEKPEAAPEEKPEKEGKPAREKEKDKDKEKEKDREKEKDKKEL) show a composition bias toward basic and acidic residues. The segment at 78–122 (ADEKPEAAPEEKPEKEGKPAREKEKDKDKEKEKDREKEKDKKELV) is disordered. The segment at 83-123 (EAAPEEKPEKEGKPAREKEKDKDKEKEKDREKEKDKKELVP) is domain II. Residues 124 to 340 (NLNPKYTFES…GMLIRLEAFA (217 aa)) are domain III, AAA+ region. 4 residues coordinate ATP: Gly-168, Gly-170, Lys-171, and Thr-172. The domain IV, binds dsDNA stretch occupies residues 341–460 (SLTGQEITLS…VEDIRKKLFT (120 aa)).

The protein belongs to the DnaA family. In terms of assembly, oligomerizes as a right-handed, spiral filament on DNA at oriC.

Its subcellular location is the cytoplasm. Functionally, plays an essential role in the initiation and regulation of chromosomal replication. ATP-DnaA binds to the origin of replication (oriC) to initiate formation of the DNA replication initiation complex once per cell cycle. Binds the DnaA box (a 9 base pair repeat at the origin) and separates the double-stranded (ds)DNA. Forms a right-handed helical filament on oriC DNA; dsDNA binds to the exterior of the filament while single-stranded (ss)DNA is stabiized in the filament's interior. The ATP-DnaA-oriC complex binds and stabilizes one strand of the AT-rich DNA unwinding element (DUE), permitting loading of DNA polymerase. After initiation quickly degrades to an ADP-DnaA complex that is not apt for DNA replication. Binds acidic phospholipids. This is Chromosomal replication initiator protein DnaA from Geobacter sp. (strain M21).